The primary structure comprises 738 residues: Elongation factor G, mitochondrial (738 aa).

Residues 1–20 form a disordered region; sequence MCIGPAPTPETEEELPPSPQ. The tr-type G domain occupies 32-320; sequence RFQRNIGVSA…GVCAYLPNPA (289 aa). GTP contacts are provided by residues 41 to 48, 118 to 122, and 172 to 175; these read AHIDSGKT, DTPGH, and NKMD.

The protein belongs to the TRAFAC class translation factor GTPase superfamily. Classic translation factor GTPase family. EF-G/EF-2 subfamily.

Its subcellular location is the mitochondrion. It participates in protein biosynthesis; polypeptide chain elongation. Mitochondrial GTPase that catalyzes the GTP-dependent ribosomal translocation step during translation elongation. During this step, the ribosome changes from the pre-translocational (PRE) to the post-translocational (POST) state as the newly formed A-site-bound peptidyl-tRNA and P-site-bound deacylated tRNA move to the P and E sites, respectively. Catalyzes the coordinated movement of the two tRNA molecules, the mRNA and conformational changes in the ribosome. The polypeptide is Elongation factor G, mitochondrial (Laccaria bicolor (strain S238N-H82 / ATCC MYA-4686) (Bicoloured deceiver)).